We begin with the raw amino-acid sequence, 323 residues long: MIFSTLEHILTHISFSTVSVVITLHLITLLVNEIVGLYNSLEKGMLVTFFCITGLLVTRWVYWKHFPLSDLYESLIFLSWSFYLIHMIPSFLKKEKNSLNVITAPSAIFTQGFATSGLLTEMHQSGILVPALQSQWLMMHVSMMVLGYAALLGGSLLSVTLLIIIFQKDLIQVFDKRKHLLNESFFFGEIQYINEKSNIVQNASPSYVRNYYRSQLIEQLDHWSYRVISLGFIFLTIGILSGAVWANEAWGSYWNWDPKETWAFITWTIFAIYLHIRTNKNLRGANSAIVAFIGFLIIWICYFGVNLLGIGLHSYGSFTLTLN.

A run of 8 helical transmembrane segments spans residues V18–Y38, K43–W63, L71–F91, L99–L119, L146–F166, V227–N247, W256–I276, and A288–L308.

This sequence belongs to the CcmF/CycK/Ccl1/NrfE/CcsA family. In terms of assembly, may interact with Ccs1.

Its subcellular location is the plastid. The protein localises to the chloroplast thylakoid membrane. In terms of biological role, required during biogenesis of c-type cytochromes (cytochrome c6 and cytochrome f) at the step of heme attachment. The chain is Cytochrome c biogenesis protein CcsA from Spinacia oleracea (Spinach).